We begin with the raw amino-acid sequence, 175 residues long: Ribosome maturation factor RimM (175 aa).

A PRC barrel domain is found at 96 to 175 (EGDYYWHDLI…TIEVDWDAGF (80 aa)).

This sequence belongs to the RimM family. Binds ribosomal protein uS19.

It is found in the cytoplasm. In terms of biological role, an accessory protein needed during the final step in the assembly of 30S ribosomal subunit, possibly for assembly of the head region. Essential for efficient processing of 16S rRNA. May be needed both before and after RbfA during the maturation of 16S rRNA. It has affinity for free ribosomal 30S subunits but not for 70S ribosomes. This is Ribosome maturation factor RimM from Haemophilus influenzae (strain PittEE).